A 398-amino-acid polypeptide reads, in one-letter code: Tryptophan synthase beta chain (398 aa).

Lysine 89 is modified (N6-(pyridoxal phosphate)lysine).

The protein belongs to the TrpB family. Tetramer of two alpha and two beta chains. Requires pyridoxal 5'-phosphate as cofactor.

It carries out the reaction (1S,2R)-1-C-(indol-3-yl)glycerol 3-phosphate + L-serine = D-glyceraldehyde 3-phosphate + L-tryptophan + H2O. It functions in the pathway amino-acid biosynthesis; L-tryptophan biosynthesis; L-tryptophan from chorismate: step 5/5. In terms of biological role, the beta subunit is responsible for the synthesis of L-tryptophan from indole and L-serine. The chain is Tryptophan synthase beta chain from Methanopyrus kandleri (strain AV19 / DSM 6324 / JCM 9639 / NBRC 100938).